The following is a 184-amino-acid chain: Bifunctional protein PyrR (184 aa).

A PRPP-binding motif is present at residues 105–117; the sequence is VVMVDDVLFTGRT.

The protein belongs to the purine/pyrimidine phosphoribosyltransferase family. PyrR subfamily.

The enzyme catalyses UMP + diphosphate = 5-phospho-alpha-D-ribose 1-diphosphate + uracil. In terms of biological role, regulates the transcription of the pyrimidine nucleotide (pyr) operon in response to exogenous pyrimidines. Functionally, also displays a weak uracil phosphoribosyltransferase activity which is not physiologically significant. This chain is Bifunctional protein PyrR, found in Rubrobacter xylanophilus (strain DSM 9941 / JCM 11954 / NBRC 16129 / PRD-1).